Reading from the N-terminus, the 234-residue chain is Leucyl/phenylalanyl-tRNA--protein transferase (234 aa).

It belongs to the L/F-transferase family.

It is found in the cytoplasm. The catalysed reaction is N-terminal L-lysyl-[protein] + L-leucyl-tRNA(Leu) = N-terminal L-leucyl-L-lysyl-[protein] + tRNA(Leu) + H(+). It catalyses the reaction N-terminal L-arginyl-[protein] + L-leucyl-tRNA(Leu) = N-terminal L-leucyl-L-arginyl-[protein] + tRNA(Leu) + H(+). The enzyme catalyses L-phenylalanyl-tRNA(Phe) + an N-terminal L-alpha-aminoacyl-[protein] = an N-terminal L-phenylalanyl-L-alpha-aminoacyl-[protein] + tRNA(Phe). In terms of biological role, functions in the N-end rule pathway of protein degradation where it conjugates Leu, Phe and, less efficiently, Met from aminoacyl-tRNAs to the N-termini of proteins containing an N-terminal arginine or lysine. The protein is Leucyl/phenylalanyl-tRNA--protein transferase of Pseudoalteromonas atlantica (strain T6c / ATCC BAA-1087).